We begin with the raw amino-acid sequence, 792 residues long: RAD50-interacting protein 1 (792 aa).

Residues 1–22 form a disordered region; that stretch reads MLPAGEIGASPAAPCCSESGDE. A coiled-coil region spans residues 103 to 124; it reads IRSALKNAEESKQFLNQFLEQE. An RINT1/TIP20 domain is found at 220–792; that stretch reads WHKILKDKLT…LRTNWPNTGK (573 aa).

Belongs to the RINT1 family. In terms of assembly, component of the NRZ complex composed of NBAS, ZW10 and RINT1/TIP20L; NRZ associates with SNAREs STX18, USE1L, BNIP1/SEC20L and SEC22B (the assembly has been described as syntaxin 18 complex). Interacts directly with BNIP1/SEC20L and ZW10. Interacts with UVRAG. Interacts with RAD50 during late S and G2/M phases. Interacts with RBL2, preferentially with the active, hypophosphorylated form.

It localises to the cytoplasm. It is found in the endoplasmic reticulum membrane. Functionally, involved in regulation of membrane traffic between the Golgi and the endoplasmic reticulum (ER); the function is proposed to depend on its association in the NRZ complex which is believed to play a role in SNARE assembly at the ER. May play a role in cell cycle checkpoint control. Essential for telomere length control. This Homo sapiens (Human) protein is RAD50-interacting protein 1 (RINT1).